The following is a 189-amino-acid chain: Testis-expressed protein 22 (189 aa).

The segment at 1-120 is disordered; that stretch reads MDSRQQRPQR…TQSVPTPPLQ (120 aa). Positions 14-24 are enriched in low complexity; it reads QWQLAQEQRQQ. Basic and acidic residues predominate over residues 70–87; it reads IDERRRLALQRMQERTDT. Positions 103 to 114 are enriched in low complexity; it reads QQTETSPSTQSV.

Mainly expressed in spermatocytes and spermatids in testis.

Its subcellular location is the cytoplasm. It is found in the cytoplasmic vesicle. The protein localises to the secretory vesicle. It localises to the acrosome. This is Testis-expressed protein 22 (Tex22) from Mus musculus (Mouse).